A 211-amino-acid chain; its full sequence is Large ribosomal subunit protein uL3 (211 aa).

Gln-150 is modified (N5-methylglutamine).

The protein belongs to the universal ribosomal protein uL3 family. As to quaternary structure, part of the 50S ribosomal subunit. Forms a cluster with proteins L14 and L19. In terms of processing, methylated by PrmB.

In terms of biological role, one of the primary rRNA binding proteins, it binds directly near the 3'-end of the 23S rRNA, where it nucleates assembly of the 50S subunit. The sequence is that of Large ribosomal subunit protein uL3 from Pseudomonas syringae pv. syringae (strain B728a).